A 479-amino-acid chain; its full sequence is Ribosomal RNA small subunit methyltransferase F (479 aa).

S-adenosyl-L-methionine-binding positions include 125–131, E149, D176, and D194; that span reads AAAPGSK. C247 functions as the Nucleophile in the catalytic mechanism.

The protein belongs to the class I-like SAM-binding methyltransferase superfamily. RsmB/NOP family.

It is found in the cytoplasm. It catalyses the reaction cytidine(1407) in 16S rRNA + S-adenosyl-L-methionine = 5-methylcytidine(1407) in 16S rRNA + S-adenosyl-L-homocysteine + H(+). Functionally, specifically methylates the cytosine at position 1407 (m5C1407) of 16S rRNA. In Escherichia coli O17:K52:H18 (strain UMN026 / ExPEC), this protein is Ribosomal RNA small subunit methyltransferase F.